The following is a 465-amino-acid chain: UDP-glucose:undecaprenyl-phosphate glucose-1-phosphate transferase (465 aa).

5 helical membrane-spanning segments follow: residues 23–43 (FSDILIIFLGIYFSCFINDYF), 46–66 (LHYVLMALVALVVFQMIGGIT), 82–102 (ILILKNWSLSFLLTLGFVTLF), 105–125 (FDLTFRTFIFWYLAVCAGFVV), and 280–300 (IIVSSLILILISPILLVIATA).

It belongs to the bacterial sugar transferase family.

The protein localises to the cell inner membrane. The enzyme catalyses di-trans,octa-cis-undecaprenyl phosphate + UDP-alpha-D-glucose = alpha-D-glucosyl di-trans,octa-cis-undecaprenyl diphosphate + UMP. It functions in the pathway capsule biogenesis; capsule polysaccharide biosynthesis. Its function is as follows. Is likely the initiating enzyme for the K2 capsular polysaccharide synthesis. Catalyzes the transfer of the glucose-1-phosphate moiety from UDP-Glc onto the carrier lipid undecaprenyl phosphate (C55-P), forming a phosphoanhydride bond yielding to glucosyl-pyrophosphoryl-undecaprenol (Glc-PP-C55). In Klebsiella pneumoniae, this protein is UDP-glucose:undecaprenyl-phosphate glucose-1-phosphate transferase.